We begin with the raw amino-acid sequence, 695 residues long: Transketolase (695 aa).

His-37 is a substrate binding site. Thiamine diphosphate is bound by residues His-77 and 126-128 (GPL). Position 164 (Asp-164) interacts with Mg(2+). Positions 165 and 194 each coordinate thiamine diphosphate. Mg(2+) contacts are provided by Asn-194 and Ile-196. Positions 268, 361, and 388 each coordinate substrate. Position 268 (His-268) interacts with thiamine diphosphate. Glu-415 (proton donor) is an active-site residue. Phe-441 provides a ligand contact to thiamine diphosphate. His-465, Asp-473, and Arg-524 together coordinate substrate.

The protein belongs to the transketolase family. In terms of assembly, homodimer. The cofactor is Mg(2+). Ca(2+) serves as cofactor. Mn(2+) is required as a cofactor. It depends on Co(2+) as a cofactor. Requires thiamine diphosphate as cofactor.

It carries out the reaction D-sedoheptulose 7-phosphate + D-glyceraldehyde 3-phosphate = aldehydo-D-ribose 5-phosphate + D-xylulose 5-phosphate. The protein operates within carbohydrate biosynthesis; Calvin cycle. In terms of biological role, catalyzes the transfer of a two-carbon ketol group from a ketose donor to an aldose acceptor, via a covalent intermediate with the cofactor thiamine pyrophosphate. The polypeptide is Transketolase (cbbT) (Sinorhizobium medicae (strain WSM419) (Ensifer medicae)).